The sequence spans 273 residues: Ribosomal RNA small subunit methyltransferase A (273 aa).

Residues N18, L20, G45, E66, D91, and N113 each coordinate S-adenosyl-L-methionine.

This sequence belongs to the class I-like SAM-binding methyltransferase superfamily. rRNA adenine N(6)-methyltransferase family. RsmA subfamily.

It is found in the cytoplasm. The enzyme catalyses adenosine(1518)/adenosine(1519) in 16S rRNA + 4 S-adenosyl-L-methionine = N(6)-dimethyladenosine(1518)/N(6)-dimethyladenosine(1519) in 16S rRNA + 4 S-adenosyl-L-homocysteine + 4 H(+). Functionally, specifically dimethylates two adjacent adenosines (A1518 and A1519) in the loop of a conserved hairpin near the 3'-end of 16S rRNA in the 30S particle. May play a critical role in biogenesis of 30S subunits. The sequence is that of Ribosomal RNA small subunit methyltransferase A from Salmonella agona (strain SL483).